Consider the following 100-residue polypeptide: Small ribosomal subunit protein uS14c (100 aa).

A compositionally biased stretch (basic and acidic residues) spans 28 to 45 (KKEIKKVPSLSEKMEIHG). The disordered stretch occupies residues 28–59 (KKEIKKVPSLSEKMEIHGKLQSPPRNSAPTRL).

The protein belongs to the universal ribosomal protein uS14 family. As to quaternary structure, part of the 30S ribosomal subunit.

It is found in the plastid. It localises to the chloroplast. Functionally, binds 16S rRNA, required for the assembly of 30S particles. This Nandina domestica (Heavenly bamboo) protein is Small ribosomal subunit protein uS14c.